A 469-amino-acid chain; its full sequence is E3 ubiquitin-protein ligase TRAIP (469 aa).

An RING-type zinc finger spans residues 7–50 (CTICSDFFDHSRDVAAIHCGHTFHLQCLIQWFETAPSRTCPQCR). Coiled-coil stretches lie at residues 70–177 (EENV…QSQR) and 201–280 (CVSL…TLNL). The segment at 211–469 (LKEARKASGE…QAKLDTFLWS (259 aa)) is interaction with CYLD. Residue lysine 304 forms a Glycyl lysine isopeptide (Lys-Gly) (interchain with G-Cter in SUMO2) linkage. Residues 460 to 469 (QAKLDTFLWS) carry the PIP-box motif.

The protein belongs to the TRAIP family. As to quaternary structure, interacts (via PIP-box) with PCNA. Binds TRAF1, TRAF2, TRAF3, TRAF5 and TRAF6 is part of the receptor-TRAF signaling complex. May interact with CYLD; the C-terminus interacts with CYLD, however the interaction was not detected with the full-length protein. Interacts with POLK and POLN. Interacts with UIMC1. In terms of processing, sumoylated; sumoylation is required for nuclear localization. Sumoylation increases protein stability, possibly by preventing ubiquitination. Post-translationally, autoubiquitinated.

It localises to the nucleus. The protein localises to the nucleoplasm. It is found in the nucleolus. The protein resides in the chromosome. Its subcellular location is the cytoplasm. It localises to the perinuclear region. The catalysed reaction is S-ubiquitinyl-[E2 ubiquitin-conjugating enzyme]-L-cysteine + [acceptor protein]-L-lysine = [E2 ubiquitin-conjugating enzyme]-L-cysteine + N(6)-ubiquitinyl-[acceptor protein]-L-lysine.. The protein operates within protein modification; protein ubiquitination. Its function is as follows. E3 ubiquitin ligase required to protect genome stability in response to replication stress. Acts as a key regulator of interstrand cross-link repair, which takes place when both strands of duplex DNA are covalently tethered together, thereby blocking replication and transcription. Controls the choice between the two pathways of replication-coupled interstrand-cross-link repair by mediating ubiquitination of MCM7 subunit of the CMG helicase complex. Short ubiquitin chains on MCM7 promote recruitment of DNA glycosylase NEIL3. If the interstrand cross-link cannot be cleaved by NEIL3, the ubiquitin chains continue to grow on MCM7, promoting the unloading of the CMG helicase complex by the VCP/p97 ATPase, enabling the Fanconi anemia DNA repair pathway. Only catalyzes ubiquitination of MCM7 when forks converge. Also involved in the repair of covalent DNA-protein cross-links (DPCs) during DNA synthesis: promotes ubiquitination of DPCs, leading to their degradation by the proteasome. Has also been proposed to play a role in promoting translesion synthesis by mediating the assembly of 'Lys-63'-linked poly-ubiquitin chains on the Y-family polymerase POLN in order to facilitate bypass of DNA lesions and preserve genomic integrity. The function in translesion synthesis is however controversial. Acts as a regulator of the spindle assembly checkpoint. Also acts as a negative regulator of innate immune signaling by inhibiting activation of NF-kappa-B mediated by TNF. Negatively regulates TLR3/4- and RIG-I-mediated IRF3 activation and subsequent IFNB1 production and cellular antiviral response by promoting 'Lys-48'-linked polyubiquitination of TNK1 leading to its proteasomal degradation. This Homo sapiens (Human) protein is E3 ubiquitin-protein ligase TRAIP.